The following is a 673-amino-acid chain: Forkhead box protein O3 (673 aa).

Positions 1-153 (MAEAPASPAP…SGQPRKCSSR (153 aa)) are disordered. Serine 30 is subject to Phosphoserine; by AMPK. A Phosphothreonine; by PKB/AKT1 modification is found at threonine 32. At lysine 46 the chain carries N6-methyllysine. Residues 57–68 (IPEEEDDEDDED) are compositionally biased toward acidic residues. The span at 79 to 89 (IGGGGGSGTLG) shows a compositional bias: gly residues. The interval 80–108 (GGGGGSGTLGSGLLLEDSARVLAPGGQDP) is required for mitochondrial import. Lysine 149 is subject to N6-methyllysine. A DNA-binding region (fork-head) is located at residues 157 to 251 (WGNLSYADLI…KSGKAPRRRA (95 aa)). The residue at position 179 (threonine 179) is a Phosphothreonine; by AMPK. Serine 209 is subject to Phosphoserine; by STK4/MST1. At serine 215 the chain carries Phosphoserine; by MAPKAPK5. Lysine 230 bears the N6-methyllysine mark. Residues 231–302 (SSWWIINPDG…GSPTSRSSDE (72 aa)) are disordered. Lysine 242 is modified (N6-acetyllysine). A Nuclear localization signal motif is present at residues 242–259 (KSGKAPRRRAVSMDNSNK). The residue at position 253 (serine 253) is a Phosphoserine; by PKB/AKT1 and MAPKAPK5. Residues 261-272 (TKSRGRAAKKKA) show a composition bias toward basic residues. 2 positions are modified to N6-methyllysine: lysine 262 and lysine 271. 2 positions are modified to phosphoserine: serine 280 and serine 284. A compositionally biased stretch (polar residues) spans 283–298 (DSPSQLSKWPGSPTSR). Position 290 is an N6-methyllysine (lysine 290). Serine 294 carries the post-translational modification Phosphoserine. Serine 299 is subject to Phosphoserine; by CaMK2A. The segment at 300–673 (SDELDAWTDF…QASSQSWVPG (374 aa)) is mediates interaction with CHUK/IKKA and IKBKB/IKKB. Serine 311 carries the phosphoserine modification. Serine 315 is subject to Phosphoserine; by SGK1. A phosphoserine; by AMPK mark is found at serine 399 and serine 413. Lysine 419 is subject to N6-methyllysine. Position 421 is a phosphoserine (serine 421). Positions 536–587 (HQHQTQGALGGSRALSNSVSNMGLSESSSLGSAKHQQQSPVSQSMQTLSDSL) are disordered. Positions 549–582 (ALSNSVSNMGLSESSSLGSAKHQQQSPVSQSMQT) are enriched in polar residues. Position 551 is a phosphoserine; by MAPKAPK5 (serine 551). Serine 555 bears the Phosphoserine; by AMPK and MAPKAPK5 mark. Residues serine 588 and serine 626 each carry the phosphoserine; by AMPK modification. Serine 644 bears the Phosphoserine; by IKKB mark.

In terms of assembly, upon metabolic stress, forms a complex composed of FOXO3, SIRT3 and mitochondrial RNA polymerase POLRMT; the complex is recruited to mtDNA in a SIRT3-dependent manner. Also forms a complex composed of FOXO3, SIRT3, TFAM and POLRMT. Interacts with SIRT2; the interaction occurs independently of SIRT2 deacetylase activity. Interacts with YWHAB/14-3-3-beta and YWHAZ/14-3-3-zeta, which are required for cytosolic sequestration. Upon oxidative stress, interacts with STK4/MST1, which disrupts interaction with YWHAB/14-3-3-beta and leads to nuclear translocation. Interacts with PIM1. Interacts with DDIT3/CHOP. Interacts (deacetylated form) with SKP2. Interacts with CHUK and IKBKB. Interacts with CAMK2A, CAMK2B and calcineurin A. Interacts with NUPR1; this interaction represses FOXO3 transactivation. In terms of processing, in the presence of survival factors such as IGF1, phosphorylated on Thr-32 and Ser-253 by AKT1/PKB. This phosphorylated form then interacts with 14-3-3 proteins and is retained in the cytoplasm. Survival factor withdrawal induces dephosphorylation and promotes translocation to the nucleus where the dephosphorylated protein induces transcription of target genes and triggers apoptosis. Although AKT1/PKB doesn't appear to phosphorylate Ser-315 directly, it may activate other kinases that trigger phosphorylation at this residue. Phosphorylated by STK4/MST1 on Ser-209 upon oxidative stress, which leads to dissociation from YWHAB/14-3-3-beta and nuclear translocation. Phosphorylated by PIM1. Phosphorylation by AMPK leads to the activation of transcriptional activity without affecting subcellular localization. In response to metabolic stress, phosphorylated by AMPK on Ser-30 which mediates FOXO3 mitochondrial translocation. Phosphorylation by MAPKAPK5 promotes nuclear localization and DNA-binding, leading to induction of miR-34b and miR-34c expression, 2 post-transcriptional regulators of MYC that bind to the 3'UTR of MYC transcript and prevent its translation. Phosphorylated by CHUK/IKKA and IKBKB/IKKB. TNF-induced inactivation of FOXO3 requires its phosphorylation at Ser-644 by IKBKB/IKKB which promotes FOXO3 retention in the cytoplasm, polyubiquitination and ubiquitin-mediated proteasomal degradation. May be dephosphorylated by calcineurin A on Ser-299 which abolishes FOXO3 transcriptional activity. In cancer cells, ERK mediated-phosphorylation of Ser-12 is required for mitochondrial translocation of FOXO3 in response to metabolic stress or chemotherapeutic agents. Phosphorylation at Ser-253 promotes its degradation by the proteasome. Dephosphorylation at Ser-253 by protein phosphatase 2A (PPP2CA) promotes its stabilization; interaction with PPP2CA is enhanced by AMBRA1. Deacetylation by SIRT1 or SIRT2 stimulates interaction of FOXO3 with SKP2 and facilitates SCF(SKP2)-mediated FOXO3 ubiquitination and proteasomal degradation. Deacetylation by SIRT2 stimulates FOXO3-mediated transcriptional activity in response to oxidative stress. Deacetylated by SIRT3. Deacetylation by SIRT3 stimulates FOXO3-mediated mtDNA transcriptional activity in response to metabolic stress. Post-translationally, heavily methylated by SET9 which decreases stability, while moderately increasing transcriptional activity. The main methylation site is Lys-271. Methylation doesn't affect subcellular location. In terms of processing, polyubiquitinated. Ubiquitinated by a SCF complex containing SKP2, leading to proteasomal degradation. The N-terminus is cleaved following import into the mitochondrion. Ubiquitous.

Its subcellular location is the cytoplasm. The protein localises to the cytosol. It localises to the nucleus. It is found in the mitochondrion matrix. The protein resides in the mitochondrion outer membrane. Transcriptional activator that recognizes and binds to the DNA sequence 5'-[AG]TAAA[TC]A-3' and regulates different processes, such as apoptosis and autophagy. Acts as a positive regulator of autophagy in skeletal muscle: in starved cells, enters the nucleus following dephosphorylation and binds the promoters of autophagy genes, such as GABARAP1L, MAP1LC3B and ATG12, thereby activating their expression, resulting in proteolysis of skeletal muscle proteins. Triggers apoptosis in the absence of survival factors, including neuronal cell death upon oxidative stress. Participates in post-transcriptional regulation of MYC: following phosphorylation by MAPKAPK5, promotes induction of miR-34b and miR-34c expression, 2 post-transcriptional regulators of MYC that bind to the 3'UTR of MYC transcript and prevent its translation. In response to metabolic stress, translocates into the mitochondria where it promotes mtDNA transcription. In response to metabolic stress, translocates into the mitochondria where it promotes mtDNA transcription. Also acts as a key regulator of chondrogenic commitment of skeletal progenitor cells in response to lipid availability: when lipids levels are low, translocates to the nucleus and promotes expression of SOX9, which induces chondrogenic commitment and suppresses fatty acid oxidation. Also acts as a key regulator of regulatory T-cells (Treg) differentiation by activating expression of FOXP3. The chain is Forkhead box protein O3 from Homo sapiens (Human).